The following is a 304-amino-acid chain: Thyroxine 5-deiodinase (304 aa).

Residues 1-23 are disordered; sequence MPRQATSRLVVGEGEGSQGASGP. The Cytoplasmic portion of the chain corresponds to 1 to 44; it reads MPRQATSRLVVGEGEGSQGASGPAATMLRSLLLHSLRLCAQTAS. The helical; Signal-anchor for type II membrane protein transmembrane segment at 45–67 threads the bilayer; it reads CLVLFPRFLGTAFMLWLLDFLCI. At 68 to 304 the chain is on the extracellular side; sequence RKHFLGRRRR…QLHGARPRRV (237 aa). The tract at residues 78–99 is disordered; that stretch reads GQPEPEVELNSEGEEVPPDDPP. The segment covering 82-95 has biased composition (acidic residues); that stretch reads PEVELNSEGEEVPP. U170 is an active-site residue. A non-standard amino acid (selenocysteine) is located at residue U170.

The protein belongs to the iodothyronine deiodinase family. In terms of assembly, monomer. Homodimer. May undergo minor heretodimerization with DIO1 and DIO2. As to expression, expressed in placenta and several fetal tissues.

The protein resides in the cell membrane. It is found in the endosome membrane. It carries out the reaction 3,3',5'-triiodo-L-thyronine + iodide + A + H(+) = L-thyroxine + AH2. It catalyses the reaction 3,3'-diiodo-L-thyronine + iodide + A + H(+) = 3,3',5-triiodo-L-thyronine + AH2. The enzyme catalyses 3-iodo-L-thyronine + iodide + A + H(+) = 3,5-diiodo-L-thyronine + AH2. The catalysed reaction is L-thyronine + iodide + A + H(+) = 3-iodo-L-thyronine + AH2. It carries out the reaction 3',5'-diiodo-L-thyronine + iodide + A + H(+) = 3,3',5'-triiodo-L-thyronine + AH2. It catalyses the reaction 3'-iodo-L-thyronine + iodide + A + H(+) = 3,3'-diiodo-L-thyronine + AH2. The enzyme catalyses 3,3',5'-triiodothyronamine + iodide + A + H(+) = 3,3',5,5'-tetraiodothyronamine + AH2. The catalysed reaction is 3',5'-diiodothyronamine + iodide + A + H(+) = 3,3',5'-triiodothyronamine + AH2. It carries out the reaction 3,3'-diiodothyronamine + iodide + A + H(+) = 3,3',5-triiodothyronamine + AH2. It catalyses the reaction 3-iodothyronamine + iodide + A + H(+) = 3,5-diiodothyronamine + AH2. The enzyme catalyses 3'-iodothyronamine + iodide + A + H(+) = 3,3'-diiodothyronamine + AH2. The catalysed reaction is thyronamine + iodide + A + H(+) = 3-iodothyronamine + AH2. Plays a crucial role in the metabolism of thyroid hormones (TH) and has specific roles in TH activation and inactivation by deiodination. Catalyzes the deiodination of L-thyroxine (T4) to 3,3',5'-triiodothyronine (rT3), 3,5,3'-triiodothyronine (T3) to 3,3'-diiodothyronine (3,3'-T2), 3,5-diiodothyronine (3,5-T2) to 3-monoiodothyronine (3-T1), rT3 to 3',5'-diiodothyronine (3',5'-T2) and 3,3'-T2 to 3'-monoiodothyronine (3'-T1) via inner-ring deiodination (IRD). Catalyzes the deiodination of 3-T1 to L-thyronine (T0) via outer-ring deiodination (ORD). Catalyzes the tyrosyl ring deiodinations of 3,3',5,5'-tetraiodothyronamine, 3,3',5'-triiodothyronamine, 3,5,3'-triiodothyronamine, 3,5-diiodothyronamine, 3,3'-diiodothyronamine and 3-iodothyronamine. The sequence is that of Thyroxine 5-deiodinase (DIO3) from Homo sapiens (Human).